Consider the following 285-residue polypeptide: Large ribosomal subunit protein uL1m (285 aa).

Residues 1 to 19 (MLSVVAIPKICVTGPARRC) constitute a mitochondrion transit peptide.

This sequence belongs to the universal ribosomal protein uL1 family. As to quaternary structure, component of the mitochondrial large ribosomal subunit (mt-LSU). Mature yeast 74S mitochondrial ribosomes consist of a small (37S) and a large (54S) subunit. The 37S small subunit contains a 15S ribosomal RNA (15S mt-rRNA) and 34 different proteins. The 54S large subunit contains a 21S rRNA (21S mt-rRNA) and 46 different proteins.

It localises to the mitochondrion. Component of the mitochondrial ribosome (mitoribosome), a dedicated translation machinery responsible for the synthesis of mitochondrial genome-encoded proteins, including at least some of the essential transmembrane subunits of the mitochondrial respiratory chain. The mitoribosomes are attached to the mitochondrial inner membrane and translation products are cotranslationally integrated into the membrane. In Saccharomyces cerevisiae (strain ATCC 204508 / S288c) (Baker's yeast), this protein is Large ribosomal subunit protein uL1m (MRPL1).